Here is a 122-residue protein sequence, read N- to C-terminus: Large ribosomal subunit protein uL14c (122 aa).

This sequence belongs to the universal ribosomal protein uL14 family. As to quaternary structure, part of the 50S ribosomal subunit.

The protein resides in the plastid. The protein localises to the chloroplast. Binds to 23S rRNA. The protein is Large ribosomal subunit protein uL14c of Lactuca sativa (Garden lettuce).